Reading from the N-terminus, the 873-residue chain is DNA mismatch repair protein MutS (873 aa).

A disordered region spans residues 1–34 (MAAIPTPRLHRGVTHLSRQTKSRARHPMSTPQHT). Positions 8-26 (RLHRGVTHLSRQTKSRARH) are enriched in basic residues. 635–642 (GPNMGGKS) contacts ATP.

It belongs to the DNA mismatch repair MutS family.

Its function is as follows. This protein is involved in the repair of mismatches in DNA. It is possible that it carries out the mismatch recognition step. This protein has a weak ATPase activity. The sequence is that of DNA mismatch repair protein MutS from Chromobacterium violaceum (strain ATCC 12472 / DSM 30191 / JCM 1249 / CCUG 213 / NBRC 12614 / NCIMB 9131 / NCTC 9757 / MK).